A 371-amino-acid polypeptide reads, in one-letter code: Cytochrome b (371 aa).

The next 4 membrane-spanning stretches (helical) occupy residues 25–45, 69–90, 105–125, and 170–190; these read FGSMLLTCLMLQVLTGFFLAI, WIMQNTHAIGASLFFICIYIHI, WLSGVTLLMTLMATAFFGYVL, and FFALHFILPFIIISLSSIHII. Heme b is bound by residues histidine 75 and histidine 89. 2 residues coordinate heme b: histidine 174 and histidine 188. Histidine 193 is an a ubiquinone binding site. A run of 4 helical transmembrane segments spans residues 218 to 238, 280 to 300, 312 to 332, and 339 to 358; these read YKDLMTTTSMIILLFIILSFS, LGGTLALLMSILILTLPPFTH, LSQTLFWTLIATFVMITWTAT, and FITISQLTSIFYFSFFIMNP.

Belongs to the cytochrome b family. In terms of assembly, the cytochrome bc1 complex contains 3 respiratory subunits (MT-CYB, CYC1 and UQCRFS1), 2 core proteins (UQCRC1 and UQCRC2) and probably 6 low-molecular weight proteins. It depends on heme b as a cofactor.

Its subcellular location is the mitochondrion inner membrane. Component of the ubiquinol-cytochrome c reductase complex (complex III or cytochrome b-c1 complex) that is part of the mitochondrial respiratory chain. The b-c1 complex mediates electron transfer from ubiquinol to cytochrome c. Contributes to the generation of a proton gradient across the mitochondrial membrane that is then used for ATP synthesis. The sequence is that of Cytochrome b (MT-CYB) from Micrurus fulvius (Eastern coral snake).